The chain runs to 340 residues: E3 ubiquitin ligase BIG BROTHER-related (340 aa).

2 disordered regions span residues 1-56 (MPME…GVGE) and 133-182 (YDED…GNSD). Residues 34–46 (NRQTGVVSDTGSG) are compositionally biased toward polar residues. Acidic residues-rich tracts occupy residues 133-164 (YDED…EDGL) and 173-182 (DDQEDDGNSD). Residues 288 to 329 (CVICRLDYEDDEDLILLPCKHSYHSECINNWLKINKVCPVCS) form an RING-type; atypical zinc finger.

Post-translationally, auto-ubiquitinated.

The enzyme catalyses S-ubiquitinyl-[E2 ubiquitin-conjugating enzyme]-L-cysteine + [acceptor protein]-L-lysine = [E2 ubiquitin-conjugating enzyme]-L-cysteine + N(6)-ubiquitinyl-[acceptor protein]-L-lysine.. It participates in protein modification; protein ubiquitination. In terms of biological role, E3 ubiquitin-ligase probably involved in organ size regulation. The polypeptide is E3 ubiquitin ligase BIG BROTHER-related (BBR) (Arabidopsis thaliana (Mouse-ear cress)).